The primary structure comprises 268 residues: AB hydrolase superfamily protein YisY (268 aa).

Positions 23–254 (PIIFLHGWPL…NSGHGAFYEE (232 aa)) constitute an AB hydrolase-1 domain. Residues S96, D220, and H248 contribute to the active site.

The protein belongs to the AB hydrolase superfamily.

This is AB hydrolase superfamily protein YisY (yisY) from Bacillus subtilis (strain 168).